The chain runs to 141 residues: MERLQGLLLWLLLSPSVVWASRGPLRPLCRPVNATLAAENEFCPVCITFTTSICAGYCPSMVRVLPAALPPVPQPVCTYRELAFASVRLPGCPPGVDPIVSFPVALSCRCGPCRLSSSDCGGPRTQPMACDLPHLPGLLLL.

A signal peptide spans 1-20 (MERLQGLLLWLLLSPSVVWA). Cystine bridges form between cysteine 29-cysteine 77, cysteine 43-cysteine 92, cysteine 54-cysteine 108, cysteine 58-cysteine 110, and cysteine 113-cysteine 120. Residue asparagine 33 is glycosylated (N-linked (GlcNAc...) asparagine).

Belongs to the glycoprotein hormones subunit beta family. As to quaternary structure, heterodimer of a common alpha chain and a unique beta chain which confers biological specificity to thyrotropin, lutropin, follitropin and gonadotropin.

The protein localises to the secreted. In terms of biological role, promotes spermatogenesis and ovulation by stimulating the testes and ovaries to synthesize steroids. This Mus musculus (Mouse) protein is Lutropin subunit beta (Lhb).